Here is a 213-residue protein sequence, read N- to C-terminus: Adenylate kinase (213 aa).

Residue G10–T15 coordinates ATP. Residues S30–V59 form an NMP region. AMP is bound by residues T31, R36, Q57 to V59, G85 to R88, and Q92. An LID region spans residues G121–D158. R122 provides a ligand contact to ATP. Zn(2+) contacts are provided by C125 and C128. I131–F132 contributes to the ATP binding site. Zn(2+) contacts are provided by C145 and C148. AMP contacts are provided by R155 and R166. ATP is bound at residue K194.

This sequence belongs to the adenylate kinase family. As to quaternary structure, monomer.

Its subcellular location is the cytoplasm. The catalysed reaction is AMP + ATP = 2 ADP. It participates in purine metabolism; AMP biosynthesis via salvage pathway; AMP from ADP: step 1/1. In terms of biological role, catalyzes the reversible transfer of the terminal phosphate group between ATP and AMP. Plays an important role in cellular energy homeostasis and in adenine nucleotide metabolism. This Borrelia duttonii (strain Ly) protein is Adenylate kinase.